We begin with the raw amino-acid sequence, 244 residues long: 7-cyano-7-deazaguanine synthase (244 aa).

17–27 (FSGGQDSTTCL) is an ATP binding site. Cys-205, Cys-220, Cys-223, and Cys-226 together coordinate Zn(2+).

Belongs to the QueC family. It depends on Zn(2+) as a cofactor.

The catalysed reaction is 7-carboxy-7-deazaguanine + NH4(+) + ATP = 7-cyano-7-deazaguanine + ADP + phosphate + H2O + H(+). Its pathway is purine metabolism; 7-cyano-7-deazaguanine biosynthesis. Catalyzes the ATP-dependent conversion of 7-carboxy-7-deazaguanine (CDG) to 7-cyano-7-deazaguanine (preQ(0)). This Bordetella parapertussis (strain 12822 / ATCC BAA-587 / NCTC 13253) protein is 7-cyano-7-deazaguanine synthase.